The primary structure comprises 508 residues: Probable metalloreductase AIM14 (508 aa).

8 helical membrane-spanning segments follow: residues Leu18–Met38, Pro70–Ile90, Leu100–Leu120, Phe137–Pro157, Leu168–Val188, Ser198–Ala218, Val222–Ile242, and Val347–Gln367. A Ferric oxidoreductase domain is found at Leu97 to Val214. Residues Tyr241–Ser361 enclose the FAD-binding FR-type domain.

The protein belongs to the ferric reductase (FRE) family. AIM14 subfamily.

It is found in the membrane. Functionally, probable cell surface metalloreductase. May be involved in iron or copper homeostasis. This is Probable metalloreductase AIM14 (AIM14) from Kluyveromyces lactis (strain ATCC 8585 / CBS 2359 / DSM 70799 / NBRC 1267 / NRRL Y-1140 / WM37) (Yeast).